Reading from the N-terminus, the 301-residue chain is Bifunctional protein FolD (301 aa).

NADP(+) contacts are provided by residues Gly-166 to Ser-168, Ser-191, and Ile-232.

This sequence belongs to the tetrahydrofolate dehydrogenase/cyclohydrolase family. As to quaternary structure, homodimer.

It catalyses the reaction (6R)-5,10-methylene-5,6,7,8-tetrahydrofolate + NADP(+) = (6R)-5,10-methenyltetrahydrofolate + NADPH. The catalysed reaction is (6R)-5,10-methenyltetrahydrofolate + H2O = (6R)-10-formyltetrahydrofolate + H(+). It functions in the pathway one-carbon metabolism; tetrahydrofolate interconversion. Catalyzes the oxidation of 5,10-methylenetetrahydrofolate to 5,10-methenyltetrahydrofolate and then the hydrolysis of 5,10-methenyltetrahydrofolate to 10-formyltetrahydrofolate. The chain is Bifunctional protein FolD from Orientia tsutsugamushi (strain Boryong) (Rickettsia tsutsugamushi).